A 471-amino-acid polypeptide reads, in one-letter code: Kynurenine 3-monooxygenase (471 aa).

Residues Val-19, Tyr-37 to Arg-40, and Ala-57 contribute to the FAD site. Positions 85 and 99 each coordinate L-kynurenine. FAD is bound by residues Arg-111, Leu-136, Thr-172, Asp-304, and Met-317 to Asn-318. Residues Asn-363 and Tyr-398 each coordinate L-kynurenine. Transmembrane regions (helical) follow at residues Cys-385–Ser-404 and Ala-425–Thr-445.

This sequence belongs to the aromatic-ring hydroxylase family. KMO subfamily. The cofactor is FAD.

The protein resides in the mitochondrion outer membrane. The catalysed reaction is L-kynurenine + NADPH + O2 + H(+) = 3-hydroxy-L-kynurenine + NADP(+) + H2O. Its pathway is cofactor biosynthesis; NAD(+) biosynthesis; quinolinate from L-kynurenine: step 1/3. In terms of biological role, catalyzes the hydroxylation of L-kynurenine (L-Kyn) to form 3-hydroxy-L-kynurenine (L-3OHKyn). Required for synthesis of quinolinic acid, a neurotoxic NMDA receptor antagonist and potential endogenous inhibitor of NMDA receptor signaling in axonal targeting, synaptogenesis and apoptosis during brain development. Quinolinic acid may also affect NMDA receptor signaling in pancreatic beta cells, osteoblasts, myocardial cells, and the gastrointestinal tract. This Sus scrofa (Pig) protein is Kynurenine 3-monooxygenase.